A 341-amino-acid chain; its full sequence is tRNA N6-adenosine threonylcarbamoyltransferase (341 aa).

Fe cation-binding residues include His-115 and His-119. Substrate is bound by residues 137–141, Asp-170, Gly-183, Asp-187, and Asn-276; that span reads IVSGG. Asp-304 serves as a coordination point for Fe cation.

The protein belongs to the KAE1 / TsaD family. Fe(2+) is required as a cofactor.

The protein localises to the cytoplasm. It carries out the reaction L-threonylcarbamoyladenylate + adenosine(37) in tRNA = N(6)-L-threonylcarbamoyladenosine(37) in tRNA + AMP + H(+). Its function is as follows. Required for the formation of a threonylcarbamoyl group on adenosine at position 37 (t(6)A37) in tRNAs that read codons beginning with adenine. Is involved in the transfer of the threonylcarbamoyl moiety of threonylcarbamoyl-AMP (TC-AMP) to the N6 group of A37, together with TsaE and TsaB. TsaD likely plays a direct catalytic role in this reaction. This is tRNA N6-adenosine threonylcarbamoyltransferase from Staphylococcus aureus (strain MSSA476).